The sequence spans 75 residues: Large ribosomal subunit protein bL31 (75 aa).

This sequence belongs to the bacterial ribosomal protein bL31 family. Type A subfamily. Part of the 50S ribosomal subunit.

Functionally, binds the 23S rRNA. The sequence is that of Large ribosomal subunit protein bL31 from Bradyrhizobium sp. (strain BTAi1 / ATCC BAA-1182).